The following is a 407-amino-acid chain: MTEKEYNTRQTQNYALCPKCLSRIYRNPKDRDNSIIPLINNTQKCSICNNLLLNEDKIFKLILKKIKMLKIEFDTFLIATQINNQTITKNQKEIYKITNYHGNNDIKHQIRRDISRLIEEKLGKTYDYKNPEVVIMVKIRKKPYKHNPYPEISNVNIFIDSNPIFIEGKYRKLVRGIPQTKWPCTHCKGKGCEACDYTGQQYKDTVEDLISREILPMTNGNTTKFHGSGREDIDVRMLGEGRPFVIEVKHPFKRKIDLKFLRVLVNSHSDGKIEINDLKYVTKERKASIKNSSVESYKIYSAIAEFENGVTSKDIYNIEKLKTIDQRTPIRVEHRRADLIRTREIKNIEVERINSKKLHLIIKCQGGLYIKELISGDNNRTKPSVSSITNNQAECTQLDVLKVHIPE.

Asp-232 acts as the Nucleophile in catalysis. Residues Tyr-300 and Tyr-369 each contribute to the substrate site.

The protein belongs to the pseudouridine synthase Pus10 family.

It catalyses the reaction uridine(54) in tRNA = pseudouridine(54) in tRNA. The catalysed reaction is uridine(55) in tRNA = pseudouridine(55) in tRNA. In terms of biological role, responsible for synthesis of pseudouridine from uracil-54 and uracil-55 in the psi GC loop of transfer RNAs. The chain is tRNA pseudouridine synthase Pus10 from Methanosphaera stadtmanae (strain ATCC 43021 / DSM 3091 / JCM 11832 / MCB-3).